A 204-amino-acid chain; its full sequence is Nicotine blue oxidoreductase (204 aa).

In terms of assembly, homotetramer. The cofactor is FMN.

It catalyses the reaction 3,3'-bipyridine-2,2',5,5',6,6'-hexol + NADP(+) = (E)-2,2',5,5'-tetrahydroxy-6H,6'H-(3,3'-bipyridinylidene)-6,6'-dione + NADPH + 3 H(+). The enzyme catalyses 3,3'-bipyridine-2,2',5,5',6,6'-hexol + NAD(+) = (E)-2,2',5,5'-tetrahydroxy-6H,6'H-(3,3'-bipyridinylidene)-6,6'-dione + NADH + 3 H(+). The protein operates within alkaloid degradation; nicotine degradation. Its function is as follows. Catalyzes the reduction of nicotine blue to its hydroquinone form. Nicotine blue is the name given to the compound formed by the autocatalytic condensation of two molecules of 2,3,6-trihydroxypyridine, an intermediate in the nicotine degradation pathway. May play a role in preventing the intracellular formation of nicotine blue semiquinone radicals, which by redox cycling would lead to the formation of toxic reactive oxygen species. Besides nicotine blue, several other quinones are reduced by nboR. This Paenarthrobacter nicotinovorans (Arthrobacter nicotinovorans) protein is Nicotine blue oxidoreductase (nboR).